A 419-amino-acid polypeptide reads, in one-letter code: Probable 3-isopropylmalate dehydratase large subunit (419 aa).

[4Fe-4S] cluster-binding residues include cysteine 299, cysteine 359, and cysteine 362.

It belongs to the aconitase/IPM isomerase family. LeuC type 2 subfamily. As to quaternary structure, heterodimer of LeuC and LeuD. [4Fe-4S] cluster is required as a cofactor.

It carries out the reaction (2R,3S)-3-isopropylmalate = (2S)-2-isopropylmalate. The protein operates within amino-acid biosynthesis; L-leucine biosynthesis; L-leucine from 3-methyl-2-oxobutanoate: step 2/4. In terms of biological role, catalyzes the isomerization between 2-isopropylmalate and 3-isopropylmalate, via the formation of 2-isopropylmaleate. The polypeptide is Probable 3-isopropylmalate dehydratase large subunit (Methanothermobacter thermautotrophicus (strain ATCC 29096 / DSM 1053 / JCM 10044 / NBRC 100330 / Delta H) (Methanobacterium thermoautotrophicum)).